Consider the following 108-residue polypeptide: Insulin (108 aa).

Positions 1–21 (MAVWIQAGALLFLLAVSSVNA) are cleaved as a signal peptide. 3 disulfide bridges follow: Cys30–Cys94, Cys42–Cys107, and Cys93–Cys98. A propeptide spans 54-85 (DVDPPLGFLPPKSAQETEVADFAFKDHAEVIR) (c peptide).

The protein belongs to the insulin family. In terms of assembly, heterodimer of a B chain and an A chain linked by two disulfide bonds.

The protein localises to the secreted. Its function is as follows. Insulin decreases blood glucose concentration. It increases cell permeability to monosaccharides, amino acids and fatty acids. It accelerates glycolysis, the pentose phosphate cycle, and glycogen synthesis in liver. This is Insulin (ins) from Cyprinus carpio (Common carp).